The following is a 363-amino-acid chain: Ribosomal RNA large subunit methyltransferase M (363 aa).

S-adenosyl-L-methionine-binding positions include serine 194, 227 to 230 (CPGG), aspartate 246, aspartate 266, and aspartate 284. The active-site Proton acceptor is lysine 313.

The protein belongs to the class I-like SAM-binding methyltransferase superfamily. RNA methyltransferase RlmE family. RlmM subfamily. Monomer.

The protein resides in the cytoplasm. The catalysed reaction is cytidine(2498) in 23S rRNA + S-adenosyl-L-methionine = 2'-O-methylcytidine(2498) in 23S rRNA + S-adenosyl-L-homocysteine + H(+). Functionally, catalyzes the 2'-O-methylation at nucleotide C2498 in 23S rRNA. This is Ribosomal RNA large subunit methyltransferase M from Mannheimia succiniciproducens (strain KCTC 0769BP / MBEL55E).